The sequence spans 149 residues: Calmodulin-5/6/7/8 (149 aa).

Ala2 is subject to N-acetylalanine. 4 EF-hand domains span residues 8-43, 44-79, 81-116, and 117-149; these read DQIS…LGQN, PTEA…KMKD, DSEE…LGEK, and LTDE…MMAK. Residues Asp21, Asp23, Asp25, Cys27, Glu32, Asp57, Asp59, Asn61, Thr63, Glu68, Asp94, Asp96, Asn98, and Glu105 each contribute to the Ca(2+) site. Lys116 bears the N6,N6,N6-trimethyllysine mark. Positions 130, 132, 134, 136, and 141 each coordinate Ca(2+).

The protein belongs to the calmodulin family. As to expression, high expression of PCM5 and 8 in stolon tips and stems, moderate in roots, and low in leaves. Steady-state expression of PCM6 in all the tissues tested, except in the leaves where the expression is lower.

Functionally, calmodulin mediates the control of a large number of enzymes, ion channels and other proteins by Ca(2+). Among the enzymes to be stimulated by the calmodulin-Ca(2+) complex are a number of protein kinases and phosphatases. This Solanum tuberosum (Potato) protein is Calmodulin-5/6/7/8 (PCM5).